A 392-amino-acid polypeptide reads, in one-letter code: Dual-specificity RNA methyltransferase RlmN (392 aa).

The active-site Proton acceptor is the E116. The region spanning 122–364 (EEGRGTLCVS…SPIRTPRGED (243 aa)) is the Radical SAM core domain. A disulfide bond links C129 and C369. C136, C140, and C143 together coordinate [4Fe-4S] cluster. Residues 195 to 196 (GE), S227, 249 to 251 (SFH), and N326 each bind S-adenosyl-L-methionine. C369 serves as the catalytic S-methylcysteine intermediate.

The protein belongs to the radical SAM superfamily. RlmN family. [4Fe-4S] cluster serves as cofactor.

It localises to the cytoplasm. The enzyme catalyses adenosine(2503) in 23S rRNA + 2 reduced [2Fe-2S]-[ferredoxin] + 2 S-adenosyl-L-methionine = 2-methyladenosine(2503) in 23S rRNA + 5'-deoxyadenosine + L-methionine + 2 oxidized [2Fe-2S]-[ferredoxin] + S-adenosyl-L-homocysteine. It catalyses the reaction adenosine(37) in tRNA + 2 reduced [2Fe-2S]-[ferredoxin] + 2 S-adenosyl-L-methionine = 2-methyladenosine(37) in tRNA + 5'-deoxyadenosine + L-methionine + 2 oxidized [2Fe-2S]-[ferredoxin] + S-adenosyl-L-homocysteine. In terms of biological role, specifically methylates position 2 of adenine 2503 in 23S rRNA and position 2 of adenine 37 in tRNAs. m2A2503 modification seems to play a crucial role in the proofreading step occurring at the peptidyl transferase center and thus would serve to optimize ribosomal fidelity. The polypeptide is Dual-specificity RNA methyltransferase RlmN (Cereibacter sphaeroides (strain ATCC 17029 / ATH 2.4.9) (Rhodobacter sphaeroides)).